Here is a 623-residue protein sequence, read N- to C-terminus: Chaperone protein HtpG (623 aa).

Positions 1 to 336 (MVSKQQTMGF…ASDLPLNISR (336 aa)) are a; substrate-binding. The segment at 337-550 (EILQDNKQVE…EQDMGLEMQR (214 aa)) is b. The c stretch occupies residues 551 to 623 (ILQAAGQQVP…NRVNRLLVSS (73 aa)).

It belongs to the heat shock protein 90 family. As to quaternary structure, homodimer.

Its subcellular location is the cytoplasm. Its function is as follows. Molecular chaperone. Has ATPase activity. The protein is Chaperone protein HtpG of Legionella pneumophila (strain Paris).